A 387-amino-acid polypeptide reads, in one-letter code: 23S rRNA (uracil(747)-C(5))-methyltransferase RlmC (387 aa).

Residues Cys3, Cys11, Cys14, and Cys86 each coordinate [4Fe-4S] cluster. S-adenosyl-L-methionine contacts are provided by Gln211, Phe240, Glu269, and Asn319. Cys346 functions as the Nucleophile in the catalytic mechanism.

This sequence belongs to the class I-like SAM-binding methyltransferase superfamily. RNA M5U methyltransferase family. RlmC subfamily.

The catalysed reaction is uridine(747) in 23S rRNA + S-adenosyl-L-methionine = 5-methyluridine(747) in 23S rRNA + S-adenosyl-L-homocysteine + H(+). Catalyzes the formation of 5-methyl-uridine at position 747 (m5U747) in 23S rRNA. The sequence is that of 23S rRNA (uracil(747)-C(5))-methyltransferase RlmC from Pasteurella multocida (strain Pm70).